Consider the following 350-residue polypeptide: Biotin synthase (350 aa).

One can recognise a Radical SAM core domain in the interval 54-278 (REIQLSTLLS…TMPQSYVRLS (225 aa)). [4Fe-4S] cluster contacts are provided by Cys69, Cys73, and Cys76. The [2Fe-2S] cluster site is built by Cys113, Cys144, Cys204, and Arg276.

Belongs to the radical SAM superfamily. Biotin synthase family. As to quaternary structure, homodimer. The cofactor is [4Fe-4S] cluster. [2Fe-2S] cluster is required as a cofactor.

The enzyme catalyses (4R,5S)-dethiobiotin + (sulfur carrier)-SH + 2 reduced [2Fe-2S]-[ferredoxin] + 2 S-adenosyl-L-methionine = (sulfur carrier)-H + biotin + 2 5'-deoxyadenosine + 2 L-methionine + 2 oxidized [2Fe-2S]-[ferredoxin]. The protein operates within cofactor biosynthesis; biotin biosynthesis; biotin from 7,8-diaminononanoate: step 2/2. In terms of biological role, catalyzes the conversion of dethiobiotin (DTB) to biotin by the insertion of a sulfur atom into dethiobiotin via a radical-based mechanism. This is Biotin synthase from Neisseria meningitidis serogroup C / serotype 2a (strain ATCC 700532 / DSM 15464 / FAM18).